The following is a 412-amino-acid chain: NFATC2-interacting protein (412 aa).

The tract at residues M1–L38 is disordered. Over residues R8–R30 the composition is skewed to basic residues. A phosphoserine mark is found at S49, S51, S79, S81, and S83. Residues V58 to P115 form a disordered region. A compositionally biased stretch (low complexity) spans A86–T96. S118 carries the post-translational modification Phosphoserine. A Glycyl lysine isopeptide (Lys-Gly) (interchain with G-Cter in SUMO2) cross-link involves residue K120. Positions K136–T206 are disordered. Positions R168 to S227 form a coiled coil. The segment covering C175–E184 has biased composition (basic and acidic residues). Phosphoserine is present on residues S191, S197, and S307. A phosphothreonine mark is found at T309 and T311. The 72-residue stretch at L341–G412 folds into the Ubiquitin-like domain. 2 positions are modified to phosphoserine: S362 and S383.

Interacts with NFATC2, TRAF1, TRAF2 and PRMT1. Interacts with UBE2I/UBC9. Post-translationally, methylation at the N-terminus by PRMT1 modulates interaction with the NFAT complex and results in augmented cytokine production. Highest level detected in spleen, thymus and testis.

It localises to the nucleus. The protein localises to the cytoplasm. Its function is as follows. In T-helper 2 (Th2) cells, regulates the magnitude of NFAT-driven transcription of a specific subset of cytokine genes, including IL3, IL4, IL5 and IL13, but not IL2. Recruits PRMT1 to the IL4 promoter; this leads to enhancement of histone H4 'Arg-3'-methylation and facilitates subsequent histone acetylation at the IL4 locus, thus promotes robust cytokine expression. Down-regulates formation of poly-SUMO chains by UBE2I/UBC9. In Mus musculus (Mouse), this protein is NFATC2-interacting protein (Nfatc2ip).